The primary structure comprises 222 residues: Triosephosphate isomerase (222 aa).

9 to 11 (NFK) is a binding site for substrate. Catalysis depends on His93, which acts as the Electrophile. Catalysis depends on Glu141, which acts as the Proton acceptor. Substrate is bound by residues Ile146, Gly181, and 202–203 (AS).

It belongs to the triosephosphate isomerase family. As to quaternary structure, homotetramer; dimer of dimers.

The protein resides in the cytoplasm. The catalysed reaction is D-glyceraldehyde 3-phosphate = dihydroxyacetone phosphate. It functions in the pathway carbohydrate biosynthesis; gluconeogenesis. The protein operates within carbohydrate degradation; glycolysis; D-glyceraldehyde 3-phosphate from glycerone phosphate: step 1/1. Functionally, involved in the gluconeogenesis. Catalyzes stereospecifically the conversion of dihydroxyacetone phosphate (DHAP) to D-glyceraldehyde-3-phosphate (G3P). This chain is Triosephosphate isomerase, found in Methanothermus fervidus (strain ATCC 43054 / DSM 2088 / JCM 10308 / V24 S).